The chain runs to 591 residues: MSHKQFKSDGNIVTPYLLGLARSNPGLTVIKHDRVVFRTASAPNSGNPPKVSLVSGGGSGHEPTHAGFVGEGALDAIAAGAIFASPSTKQIYSAIKAVESPKGTLIIVKNYTGDIIHFGLAAERAKAAGMKVELVAVGDDVSVGKKKGSLVGRRGLGATVLVHKIAGAAASHGLELAEVAEVAQSVVDNSVTIAASLDHCTVPGHKPEAILGENEYEIGMGIHNESGTYKSSPLPSISELVSQMLPLLLDEDEDRSYVKFEPKEDVVLMVNNMGGMSNLELGYAAEVISEQLIDKYQIVPKRTITGAFITALNGPGFGITLMNASKAGGDILKYFDYPTTASGWNQMYHSAKDWEVLAKGQVPTAPSLKTLRNEKGSGVKADYDTFAKILLAGIAKINEVEPKVTWYDTIAGDGDCGTTLVSGGEALEEAIKNHTLRLEDAALGIEDIAYMVEDSMGGTSGGLYSIYLSALAQGVRDSGDKELTAETFKKASNVALDALYKYTRARPGYRTLIDALQPFVEALKAGKGPRAAAQAAYDGAEKTRKMDALVGRASYVAKEELRKLDSEGGLPDPGAVGLAALLDGFVTAAGY.

The 337-residue stretch at 8–344 folds into the DhaK domain; it reads SDGNIVTPYL…FDYPTTASGW (337 aa). The tract at residues 40–59 is disordered; that stretch reads ASAPNSGNPPKVSLVSGGGS. Residues 58–61, Lys109, and Asp114 contribute to the substrate site; that span reads GSGH. His223 functions as the Tele-hemiaminal-histidine intermediate in the catalytic mechanism. A DhaL domain is found at 384-587; it reads DTFAKILLAG…LAALLDGFVT (204 aa). Residues 413-416, 459-460, 511-512, and 572-574 contribute to the ATP site; these read DGDC, TS, TL, and DPG.

The protein belongs to the dihydroxyacetone kinase (DAK) family.

It carries out the reaction dihydroxyacetone + ATP = dihydroxyacetone phosphate + ADP + H(+). The enzyme catalyses D-glyceraldehyde + ATP = D-glyceraldehyde 3-phosphate + ADP + H(+). It functions in the pathway polyol metabolism; glycerol fermentation; glycerone phosphate from glycerol (oxidative route): step 2/2. Functionally, catalyzes both the phosphorylation of dihydroxyacetone and of glyceraldehyde. This Saccharomyces cerevisiae (strain ATCC 204508 / S288c) (Baker's yeast) protein is Dihydroxyacetone kinase 2 (DAK2).